Here is a 725-residue protein sequence, read N- to C-terminus: Lipoamidase (725 aa).

A disordered region spans residues 1 to 52 (MLAQESILETTVQTETESVTTETSQTVANLESETTSQTVMQEKESSSAIAES). Residues 9-27 (ETTVQTETESVTTETSQTV) show a composition bias toward low complexity. Residues 28-40 (ANLESETTSQTVM) show a composition bias toward polar residues. Residues Lys159 and Ser235 each act as charge relay system in the active site. Ser259 acts as the Acyl-ester intermediate in catalysis. The segment at 551–686 (KINQPHVEEP…NKSMIGKQEQ (136 aa)) is disordered. The span at 556-637 (HVEEPDKDKE…TSEGPIEGKD (82 aa)) shows a compositional bias: basic and acidic residues. A compositionally biased stretch (low complexity) spans 650–661 (SGSSLDNSLNSS). The span at 662–679 (ANQGTKSTESTHAFSNKS) shows a compositional bias: polar residues. The chain crosses the membrane as a helical span at residues 700 to 720 (PSTFWIVLGGAFLVTSGTIYI).

It belongs to the amidase family. Homodimer in solution.

It is found in the cell membrane. It carries out the reaction N(6)-[(R)-lipoyl]-L-lysyl-[lipoyl-carrier protein] + H2O = L-lysyl-[lipoyl-carrier protein] + (R)-lipoate. Lipoamidase activity is slightly inhibited by p-chloromercuribenzoate. In terms of biological role, amidohydrolase that releases lipoic acid from the protein-bound form. Cleaves the amide bond that links lipoic acid to the lipoylated lysine epsilon-amino groups, leading to the formation of free lipoic acid plus the unmodified protein. Shows activity toward both high molecular weight protein substrates such as a lipoyl domain and intact 2-oxoacid dehydrogenases as well as small molecule substrates such as lipoyl-lysine. Also acts on small biotinylated substrates. Hydrolyzes the synthetic substrates methyl lipoate and lipoamide. The physiologically important substrates are probably lipoyl-lysine and small peptides containing lipoyl-lysine. Lpa seems likely to enable this bacterium to utilize amide-linked forms of lipoic acid that otherwise could not be assimilated. In Enterococcus faecalis (Streptococcus faecalis), this protein is Lipoamidase.